Here is a 141-residue protein sequence, read N- to C-terminus: Large ribosomal subunit protein uL16 (141 aa).

It belongs to the universal ribosomal protein uL16 family. In terms of assembly, part of the 50S ribosomal subunit.

Its function is as follows. Binds 23S rRNA and is also seen to make contacts with the A and possibly P site tRNAs. In Kosmotoga olearia (strain ATCC BAA-1733 / DSM 21960 / TBF 19.5.1), this protein is Large ribosomal subunit protein uL16.